Reading from the N-terminus, the 346-residue chain is Low specificity L-threonine aldolase (346 aa).

Lys207 is modified (N6-(pyridoxal phosphate)lysine).

It belongs to the threonine aldolase family. In terms of assembly, homotetramer. The cofactor is pyridoxal 5'-phosphate.

The catalysed reaction is L-threonine = acetaldehyde + glycine. The enzyme catalyses L-allo-threonine = acetaldehyde + glycine. In terms of biological role, catalyzes the cleavage of L-allo-threonine and L-threonine to glycine and acetaldehyde. Can also act on L-erythro-phenylserine, L-threo-phenylserine, L-beta-3,4-methylenedioxyphenylserine and L-beta-3,4-dihydroxyphenylserine. This chain is Low specificity L-threonine aldolase (ltaE), found in Pseudomonas sp. (strain NCIMB 10558).